A 416-amino-acid polypeptide reads, in one-letter code: Gamma-glutamyl phosphate reductase (416 aa).

The protein belongs to the gamma-glutamyl phosphate reductase family.

The protein resides in the cytoplasm. It carries out the reaction L-glutamate 5-semialdehyde + phosphate + NADP(+) = L-glutamyl 5-phosphate + NADPH + H(+). Its pathway is amino-acid biosynthesis; L-proline biosynthesis; L-glutamate 5-semialdehyde from L-glutamate: step 2/2. Its function is as follows. Catalyzes the NADPH-dependent reduction of L-glutamate 5-phosphate into L-glutamate 5-semialdehyde and phosphate. The product spontaneously undergoes cyclization to form 1-pyrroline-5-carboxylate. This is Gamma-glutamyl phosphate reductase from Vibrio parahaemolyticus serotype O3:K6 (strain RIMD 2210633).